Consider the following 93-residue polypeptide: U12-lycotoxin-Ls1e (93 aa).

Positions 1 to 18 (MKFAVILLFTLVVLAVAS) are cleaved as a signal peptide. Positions 19–38 (ESVEEDTREIDVEEFQEQQR) are excised as a propeptide.

Belongs to the neurotoxin 31 family. Contains 5 disulfide bonds. As to expression, expressed by the venom gland.

It is found in the secreted. This Lycosa singoriensis (Wolf spider) protein is U12-lycotoxin-Ls1e.